Reading from the N-terminus, the 347-residue chain is NADH-ubiquinone oxidoreductase chain 2 (347 aa).

Helical transmembrane passes span 3–23, 25–45, 59–79, 96–116, 122–142, 149–169, 178–198, 201–221, 237–257, 274–294, and 323–343; these read PPIL…VMTS, HWML…PILM, YFLT…INLL, ILMT…FWVP, ISLS…LSVL, INPN…GWGG, IMAY…LYNP, MFLN…LFMI, APLI…LPPL, EMII…YFYM, and MIFL…TPMI.

Belongs to the complex I subunit 2 family. As to quaternary structure, core subunit of respiratory chain NADH dehydrogenase (Complex I) which is composed of 45 different subunits. Interacts with TMEM242.

It localises to the mitochondrion inner membrane. It carries out the reaction a ubiquinone + NADH + 5 H(+)(in) = a ubiquinol + NAD(+) + 4 H(+)(out). In terms of biological role, core subunit of the mitochondrial membrane respiratory chain NADH dehydrogenase (Complex I) which catalyzes electron transfer from NADH through the respiratory chain, using ubiquinone as an electron acceptor. Essential for the catalytic activity and assembly of complex I. The chain is NADH-ubiquinone oxidoreductase chain 2 from Civettictis civetta (African civet).